The sequence spans 181 residues: Crossover junction endodeoxyribonuclease RuvC (181 aa).

Residues Asp-8, Glu-67, and Asp-139 contribute to the active site. Positions 8, 67, and 139 each coordinate Mg(2+).

The protein belongs to the RuvC family. As to quaternary structure, homodimer which binds Holliday junction (HJ) DNA. The HJ becomes 2-fold symmetrical on binding to RuvC with unstacked arms; it has a different conformation from HJ DNA in complex with RuvA. In the full resolvosome a probable DNA-RuvA(4)-RuvB(12)-RuvC(2) complex forms which resolves the HJ. It depends on Mg(2+) as a cofactor.

The protein resides in the cytoplasm. It carries out the reaction Endonucleolytic cleavage at a junction such as a reciprocal single-stranded crossover between two homologous DNA duplexes (Holliday junction).. Functionally, the RuvA-RuvB-RuvC complex processes Holliday junction (HJ) DNA during genetic recombination and DNA repair. Endonuclease that resolves HJ intermediates. Cleaves cruciform DNA by making single-stranded nicks across the HJ at symmetrical positions within the homologous arms, yielding a 5'-phosphate and a 3'-hydroxyl group; requires a central core of homology in the junction. The consensus cleavage sequence is 5'-(A/T)TT(C/G)-3'. Cleavage occurs on the 3'-side of the TT dinucleotide at the point of strand exchange. HJ branch migration catalyzed by RuvA-RuvB allows RuvC to scan DNA until it finds its consensus sequence, where it cleaves and resolves the cruciform DNA. This chain is Crossover junction endodeoxyribonuclease RuvC, found in Acinetobacter baylyi (strain ATCC 33305 / BD413 / ADP1).